A 906-amino-acid polypeptide reads, in one-letter code: MLEKTFDPQSVEPRLYAAWEASGAFKPAEDPNAEPFVIVIPPPNVTGSLHIGHALNNTLQDVLTRFHRMRGKAALWLPGTDHAGIATQMVVERQLAAAGNIGRRDMGREAFVDKVWEWKAESGGAITNQLRRLGASCDWSRERFTLDEGLSAAVRKVFVQLYKQNLLYRDKRLVNWDPQFQTAISDLEVEQKEVDGAYWHFAYPLADGVTYQHPIAFDEDGKATEFETRDYIVVATTRPETMLGDTGVAVHPDDERYKGLVGKFVTLPIVGRRIPIVADDYADPTKGSGAVKITPAHDFNDFGVGKRAGLEAINILTVEAKLNDSVPAEYVGMDRFVARKAIVARAEEEGWLKEIEKTKHMVPHGDRSGVVIEPFLTDQWYVDAKTLAQPALKAVETGETIFEPKHWEKTYFEWLRNIEPWCVSRQLWWGHRIPAWFGPEGSIFVEESEEAAYAAARAQFGADVQLTQDEDVLDTWFSSALWPFSTLGWPEKTSDLERFYPTSTLVTGFDIIFFWVARMMMMGIHFMGEAPFKQVFINALVRDEKGAKMSKSKGNVMDPLILIDELGCDAVRFTLTAMSGQARDIKLSKQRIEGYRNFGTKLWNASRFAQMNECVRVEGFDPSTVQQPINKWIRGETVKTVAEVTKALEAPSFDEAAGALYRFVWNVFCDWYLELAKPILNGDDAAAKAETRATAAWALDVILKLLHPVMPFITEELWEKTAEFGPARETMLISAKWPELPADWIDAEAEAEIGWLVETVGEIRSIRAEMNVPPSAKPGLTIVGAGPETKARLARHRDLLLTLARLDAVREADAAPAGSAPVVMGEATGALGVAEFIDVAAEKARLTKDIAGHAGEIEKVNKKLGNPDFLARAKEEVVEENRERLAEAEAAKAKLEAALSRLASVG.

Residues proline 43–histidine 53 carry the 'HIGH' region motif. The short motif at lysine 548–serine 552 is the 'KMSKS' region element. Residue lysine 551 coordinates ATP. A coiled-coil region spans residues glutamate 842–valine 905.

It belongs to the class-I aminoacyl-tRNA synthetase family. ValS type 1 subfamily. In terms of assembly, monomer.

It localises to the cytoplasm. The enzyme catalyses tRNA(Val) + L-valine + ATP = L-valyl-tRNA(Val) + AMP + diphosphate. In terms of biological role, catalyzes the attachment of valine to tRNA(Val). As ValRS can inadvertently accommodate and process structurally similar amino acids such as threonine, to avoid such errors, it has a 'posttransfer' editing activity that hydrolyzes mischarged Thr-tRNA(Val) in a tRNA-dependent manner. This chain is Valine--tRNA ligase, found in Caulobacter vibrioides (strain ATCC 19089 / CIP 103742 / CB 15) (Caulobacter crescentus).